We begin with the raw amino-acid sequence, 258 residues long: Putative cysteine-rich repeat secretory protein 16 (258 aa).

An N-terminal signal peptide occupies residues 1–30; the sequence is MYYSSPTCFVLITIFAVVVTQLIFMRTVSS. Gnk2-homologous domains are found at residues 37 to 139 and 144 to 247; these read YLNH…PFDT and DKDN…LYPF.

Belongs to the cysteine-rich repeat secretory protein family.

Its subcellular location is the secreted. The sequence is that of Putative cysteine-rich repeat secretory protein 16 (CRRSP16) from Arabidopsis thaliana (Mouse-ear cress).